The primary structure comprises 392 residues: MSNIVYLTVTGEQQGSISAGCGTSESTGNRWQSGHEDEIFTFSLLNNINNTGLGSQFHGITFCKLIDKSTPLFINSINNNEQLFMGFDFYRINRFGRLEKYYYIQLRGAFLSAIHHQIIENQLDTETITISYEFILCQHLIANTEFSYLALPENYNRLFLPNSKNQTNNRFKTLNSKAIGRLLAAGGVYNGNIEGFRDTAEKLGGDAIKGYDQILNEKTAGIAIATASILLTKRSNVDTYTEINSYLGKLRGQQKLLDGIDIIEIIYIKRPSKDLANLRKEFNKTVRKNFLIKLAKTSEASGRFNAEDLLRMRKGNVPLNYNVHHKLSLDDGGTNDFENLVLIENEPYHKVFTNMQSRIAKGILVGESKITPWAIPSGSIYPPMKNIMDHTK.

It belongs to the hcp1 family.

This is an uncharacterized protein from Escherichia coli (strain K12).